We begin with the raw amino-acid sequence, 354 residues long: Ferrochelatase (354 aa).

Residues histidine 204 and glutamate 306 each coordinate Fe cation.

This sequence belongs to the ferrochelatase family.

The protein resides in the cytoplasm. The catalysed reaction is heme b + 2 H(+) = protoporphyrin IX + Fe(2+). It participates in porphyrin-containing compound metabolism; protoheme biosynthesis; protoheme from protoporphyrin-IX: step 1/1. Functionally, catalyzes the ferrous insertion into protoporphyrin IX. In Coxiella burnetii (strain CbuK_Q154) (Coxiella burnetii (strain Q154)), this protein is Ferrochelatase.